The primary structure comprises 610 residues: T-cell immunomodulatory protein (610 aa).

An N-terminal signal peptide occupies residues 1–32 (MAAGRLPSARAVLAPLFLGLALLSVGPAPARA). Asparagine 35, asparagine 123, asparagine 138, asparagine 145, asparagine 150, asparagine 175, and asparagine 241 each carry an N-linked (GlcNAc...) asparagine glycan. Residues 98-135 (LVTSVVPGDYDGDSQMDVLLTYFPQNHTNSELGAVIFW) form an FG-GAP 1; atypical repeat. An FG-GAP 2; atypical repeat occupies 153–183 (FHDQPLIMDFNGDLIPDVFGITNESSQPQIL). Residues 256–291 (VVGQSAFADFDGDGHMDHLLPGCEDKDCQKSAIYLM) form an FG-GAP 3; atypical repeat. N-linked (GlcNAc...) asparagine glycosylation is found at asparagine 351, asparagine 369, and asparagine 480. The chain crosses the membrane as a helical span at residues 565-585 (VLLTAVALIGVCIFILAIIAI).

It belongs to the TIP family. Interacts with RUVBL1, RUVBL2 and alpha-tubulin.

The protein resides in the secreted. The protein localises to the membrane. In terms of biological role, modulator of T-cell function. Has a protective effect in graft versus host disease model. This Mus musculus (Mouse) protein is T-cell immunomodulatory protein.